Consider the following 271-residue polypeptide: tRNA (guanine-N(7)-)-methyltransferase (271 aa).

Residues Glu95, Glu120, Asp147, and Asp175 each contribute to the S-adenosyl-L-methionine site. Asp175 is an active-site residue. Residues Lys179, Asp211, and 249–252 (THFE) contribute to the substrate site.

Belongs to the class I-like SAM-binding methyltransferase superfamily. TrmB family.

It catalyses the reaction guanosine(46) in tRNA + S-adenosyl-L-methionine = N(7)-methylguanosine(46) in tRNA + S-adenosyl-L-homocysteine. It participates in tRNA modification; N(7)-methylguanine-tRNA biosynthesis. In terms of biological role, catalyzes the formation of N(7)-methylguanine at position 46 (m7G46) in tRNA. This is tRNA (guanine-N(7)-)-methyltransferase from Rhodopirellula baltica (strain DSM 10527 / NCIMB 13988 / SH1).